The chain runs to 319 residues: Acetyl esterase (319 aa).

Positions 91–93 (HGG) match the Involved in the stabilization of the negatively charged intermediate by the formation of the oxyanion hole motif. Catalysis depends on residues Ser165, Asp262, and His292.

It belongs to the 'GDXG' lipolytic enzyme family. Homodimer. Interacts with MalT and MelA.

It localises to the cytoplasm. In terms of biological role, displays esterase activity towards short chain fatty esters (acyl chain length of up to 8 carbons). Able to hydrolyze triacetylglycerol (triacetin) and tributyrylglycerol (tributyrin), but not trioleylglycerol (triolein) or cholesterol oleate. Negatively regulates MalT activity by antagonizing maltotriose binding. Inhibits MelA galactosidase activity. This Escherichia coli O17:K52:H18 (strain UMN026 / ExPEC) protein is Acetyl esterase.